The chain runs to 279 residues: Probable endonuclease 4 (279 aa).

9 residues coordinate Zn(2+): H74, H112, E147, D180, H183, H214, D227, H229, and E259.

This sequence belongs to the AP endonuclease 2 family. Zn(2+) is required as a cofactor.

The enzyme catalyses Endonucleolytic cleavage to 5'-phosphooligonucleotide end-products.. In terms of biological role, endonuclease IV plays a role in DNA repair. It cleaves phosphodiester bonds at apurinic or apyrimidinic (AP) sites, generating a 3'-hydroxyl group and a 5'-terminal sugar phosphate. The sequence is that of Probable endonuclease 4 from Mycoplasma mobile (strain ATCC 43663 / 163K / NCTC 11711) (Mesomycoplasma mobile).